A 380-amino-acid chain; its full sequence is Chaperone protein DnaJ (380 aa).

The J domain occupies 5–70 (DFYDVLGVNR…QKRAAYDQYG (66 aa)). Residues 139–217 (GCEKQIRIPT…CHGAGRVKSQ (79 aa)) form a CR-type zinc finger. Residues Cys152, Cys155, Cys169, Cys172, Cys191, Cys194, Cys205, and Cys208 each coordinate Zn(2+). CXXCXGXG motif repeat units follow at residues 152 to 159 (CSHCHGSG), 169 to 176 (CPTCGGAG), 191 to 198 (CPTCHGSG), and 205 to 212 (CNICHGAG).

It belongs to the DnaJ family. As to quaternary structure, homodimer. Zn(2+) serves as cofactor.

The protein resides in the cytoplasm. Functionally, participates actively in the response to hyperosmotic and heat shock by preventing the aggregation of stress-denatured proteins and by disaggregating proteins, also in an autonomous, DnaK-independent fashion. Unfolded proteins bind initially to DnaJ; upon interaction with the DnaJ-bound protein, DnaK hydrolyzes its bound ATP, resulting in the formation of a stable complex. GrpE releases ADP from DnaK; ATP binding to DnaK triggers the release of the substrate protein, thus completing the reaction cycle. Several rounds of ATP-dependent interactions between DnaJ, DnaK and GrpE are required for fully efficient folding. Also involved, together with DnaK and GrpE, in the DNA replication of plasmids through activation of initiation proteins. This is Chaperone protein DnaJ from Laribacter hongkongensis (strain HLHK9).